The primary structure comprises 581 residues: Sulfate adenylyltransferase (581 aa).

Positions 1-176 are N-terminal; that stretch reads MANAPHGGVL…VQAIQAPTHF (176 aa). A catalytic region spans residues 177 to 401; it reads DYVPLRFTPA…LRESYPPRPQ (225 aa). Sulfate is bound at residue Gln204. Residues 204–207 and 298–301 contribute to the ATP site; these read QTRN and GRDH. Catalysis depends on residues Thr205, Arg206, and Asn207. Residue Arg206 coordinates sulfate. Residue Ala302 coordinates sulfate. Met340 is a binding site for ATP. The tract at residues 402–581 is allosteric regulation domain; adenylyl-sulfate kinase-like; the sequence is QGFTILLTGL…IMILESQNLV (180 aa). 3'-phosphoadenylyl sulfate-binding positions include 441–444, 486–487, and Arg526; these read EELR and TA.

In the N-terminal section; belongs to the sulfate adenylyltransferase family. The protein in the C-terminal section; belongs to the APS kinase family. As to quaternary structure, homohexamer. Dimer of trimers.

Its subcellular location is the cytoplasm. It carries out the reaction sulfate + ATP + H(+) = adenosine 5'-phosphosulfate + diphosphate. It participates in sulfur metabolism; hydrogen sulfide biosynthesis; sulfite from sulfate: step 1/3. Its activity is regulated as follows. Allosterically inhibited by 3'-phosphoadenosine 5'-phosphosulfate (PAPS). Its function is as follows. Catalyzes the first intracellular reaction of sulfate assimilation, forming adenosine-5'-phosphosulfate (APS) from inorganic sulfate and ATP. Plays an important role in sulfate activation as a component of the biosynthesis pathway of sulfur-containing amino acids. This is Sulfate adenylyltransferase from Cryptococcus neoformans var. neoformans serotype D (strain B-3501A) (Filobasidiella neoformans).